The primary structure comprises 233 residues: Bcl-2-like protein 1 (233 aa).

A BH4 motif is present at residues 4-24; sequence SNRELVVDFLSYKLSQKGYSW. Residues 27–73 form a disordered region; sequence FSDVEENRTEAPEETEPERETPSAINGNPSWHLADSPAVNGATGHSS. Position 49 is a phosphoserine; by PLK3 (S49). S62 carries the post-translational modification Phosphoserine; by CDK1. The BH3 motif lies at 86–100; that stretch reads VKQALREAGDEFELR. The BH1 signature appears at 129-148; the sequence is ELFRDGVNWGRIVAFFSFGG. The BH2 motif lies at 180 to 195; the sequence is PWIQENGGWDTFVDLY. Residues 210–226 form a helical membrane-spanning segment; sequence FNRWFLTGMTVAGVVLL.

Belongs to the Bcl-2 family. As to quaternary structure, homodimer. Interacts with BCL2L11. Interacts with BAD. Interacts with PGAM5. Interacts with HEBP2. Interacts with p53/TP53 and BBC3; interaction with BBC3 disrupts the interaction with p53/TP53. Interacts with ATP5F1A and ATP5F1B; the interactions mediate the association of isoform Bcl-X(L) with the mitochondrial membrane ATP synthase F(1)F(0) ATP synthase. Interacts with VDAC1. Interacts with BCL2L11 (via BH3). Interacts with RNF183. Interacts with GIMAP3/IAN4 and GIMAP5/IAN5. Interacts with GIMAP5 and HSPA8/HSC70; the interaction between HSPA8 and BCL2L1 is impaired in the absence of GIMAP5. Interacts with isoform 4 of CLU; this interaction releases and activates BAX and promotes cell death. Forms heterodimers with BAX, BAK or BCL2; heterodimerization with BAX does not seem to be required for anti-apoptotic activity. Interacts with isoform 1 of SIVA1; the interaction inhibits the anti-apoptotic activity. Interacts with IKZF3. Interacts with RTL10/BOP. Interacts with DNM1L and CLTA; DNM1L and BCL2L1 isoform BCL-X(L) may form a complex in synaptic vesicles that also contains clathrin and MFF. Interacts (via the loop between motifs BH4 and BH3) with NLRP1 (via LRR repeats), but not with NLRP2, NLRP3, NLRP4, PYCARD, nor MEFV. Interacts with BECN1. Proteolytically cleaved by caspases during apoptosis. The cleaved protein, lacking the BH4 motif, has pro-apoptotic activity. Post-translationally, phosphorylated on Ser-62 by CDK1. This phosphorylation is partial in normal mitotic cells, but complete in G2-arrested cells upon DNA-damage, thus promoting subsequent apoptosis probably by triggering caspases-mediated proteolysis. Phosphorylated by PLK3, leading to regulate the G2 checkpoint and progression to cytokinesis during mitosis. Phosphorylation at Ser-49 appears during the S phase and G2, disappears rapidly in early mitosis during prometaphase, metaphase and early anaphase, and re-appears during telophase and cytokinesis. In terms of processing, ubiquitinated by RNF183 during prolonged ER stress, leading to degradation by the proteosome. As to expression, expressed in most tissues. Bcl-X(beta) is specifically expressed in cerebellum, heart, and thymus. In the ovary, the predominant form is Bcl-X(L), with a small but detectable level of Bcl-X(S).

It localises to the mitochondrion inner membrane. The protein localises to the mitochondrion outer membrane. Its subcellular location is the mitochondrion matrix. It is found in the cytoplasmic vesicle. The protein resides in the secretory vesicle. It localises to the synaptic vesicle membrane. The protein localises to the cytoplasm. Its subcellular location is the cytosol. It is found in the cytoskeleton. The protein resides in the microtubule organizing center. It localises to the centrosome. The protein localises to the nucleus membrane. In terms of biological role, potent inhibitor of cell death. Inhibits activation of caspases. Appears to regulate cell death by blocking the voltage-dependent anion channel (VDAC) by binding to it and preventing the release of the caspase activator, CYC1, from the mitochondrial membrane. Also acts as a regulator of G2 checkpoint and progression to cytokinesis during mitosis. Its function is as follows. Isoform Bcl-X(L) also regulates presynaptic plasticity, including neurotransmitter release and recovery, number of axonal mitochondria as well as size and number of synaptic vesicle clusters. During synaptic stimulation, increases ATP availability from mitochondria through regulation of mitochondrial membrane ATP synthase F(1)F(0) activity and regulates endocytic vesicle retrieval in hippocampal neurons through association with DMN1L and stimulation of its GTPase activity in synaptic vesicles. May attenuate inflammation impairing NLRP1-inflammasome activation, hence CASP1 activation and IL1B release. Isoform Bcl-X(S) promotes apoptosis. The sequence is that of Bcl-2-like protein 1 (Bcl2l1) from Rattus norvegicus (Rat).